A 312-amino-acid polypeptide reads, in one-letter code: DNA-directed RNA polymerase subunit alpha (312 aa).

Residues Met-1–Asp-226 form an alpha N-terminal domain (alpha-NTD) region. Residues Lys-243 to Asp-312 form an alpha C-terminal domain (alpha-CTD) region.

The protein belongs to the RNA polymerase alpha chain family. Homodimer. The RNAP catalytic core consists of 2 alpha, 1 beta, 1 beta' and 1 omega subunit. When a sigma factor is associated with the core the holoenzyme is formed, which can initiate transcription.

The enzyme catalyses RNA(n) + a ribonucleoside 5'-triphosphate = RNA(n+1) + diphosphate. Functionally, DNA-dependent RNA polymerase catalyzes the transcription of DNA into RNA using the four ribonucleoside triphosphates as substrates. This is DNA-directed RNA polymerase subunit alpha from Lactobacillus acidophilus (strain ATCC 700396 / NCK56 / N2 / NCFM).